We begin with the raw amino-acid sequence, 1024 residues long: Multidrug resistance protein MdtC (1024 aa).

The next 12 helical transmembrane spans lie at 3–23, 333–353, 360–380, 387–407, 431–451, 463–483, 528–548, 853–873, 875–895, 897–917, 953–973, and 984–1004; these read FLSL…ALVL, EVEQ…FAFL, LIPA…MYLC, LSLM…IVVL, VGFT…PLLM, FAIT…TLTP, WALL…ISMP, LWLI…LYES, VHPL…LLAL, LFNT…IGIV, PIIM…LSSG, and ITIV…TPVV.

It belongs to the resistance-nodulation-cell division (RND) (TC 2.A.6) family. MdtC subfamily. As to quaternary structure, part of a tripartite efflux system composed of MdtA, MdtB and MdtC. MdtC forms a heteromultimer with MdtB.

The protein localises to the cell inner membrane. The protein is Multidrug resistance protein MdtC of Erwinia amylovora (strain ATCC 49946 / CCPPB 0273 / Ea273 / 27-3).